A 249-amino-acid chain; its full sequence is Putative S-adenosyl-L-methionine-dependent methyltransferase Mjls_0570 (249 aa).

Residues aspartate 111 and aspartate 141–leucine 142 contribute to the S-adenosyl-L-methionine site.

Belongs to the UPF0677 family.

Its function is as follows. Exhibits S-adenosyl-L-methionine-dependent methyltransferase activity. The chain is Putative S-adenosyl-L-methionine-dependent methyltransferase Mjls_0570 from Mycobacterium sp. (strain JLS).